We begin with the raw amino-acid sequence, 547 residues long: CAP-Gly domain-containing linker protein 3 (547 aa).

The tract at residues 1 to 49 is disordered; sequence MTKTDPAPMAPPPRGEEEEEEEEDEPVPEAPSPTQERRQKPVVHPSAPA. Acidic residues predominate over residues 16–27; sequence EEEEEEEEDEPV. 3 ANK repeats span residues 117–155, 160–189, and 197–226; these read TDMTLLHYACKAGAHGVGDPAAAVRLSQQLLALGADVTL, TNMNALHYAAYFDVPDLVRVLLKGARPRVV, and NHGSALHIAASSLCLGAAKCLLEHGANPAL. One can recognise a CAP-Gly 1 domain in the interval 314 to 356; it reads GTTEFASGQWVGVELDEPEGKNDGSVGGVRYFICPPKQGLFAS. The segment at 365–413 is disordered; the sequence is DAPPSSVTSTPRTPRMDFSRVTGKGRREHKGKKKTPSSPSLGSLQQRDR. Low complexity predominate over residues 367–377; sequence PPSSVTSTPRT. Thr-374 carries the post-translational modification Phosphothreonine. Residues 387 to 399 are compositionally biased toward basic residues; that stretch reads GKGRREHKGKKKT. Residues 400–409 are compositionally biased toward polar residues; the sequence is PSSPSLGSLQ. Phosphoserine is present on Ser-401. A CAP-Gly 2 domain is found at 436-478; sequence GKTDFAPGYWYGIELDQPTGKHDGSVFGVRYFTCPPRHGVFAP. Residues 488–547 are goLD; sequence STDSPGDSVGAKKVHQVTMTQPKRTFTTVRTPKDIASENSISRLLFCCWFPWMLRAEMQS. S-palmitoyl cysteine attachment occurs at residues Cys-534 and Cys-535.

In terms of assembly, homodimer. Interacts with AKT1 and AKT2; when AKT1 and AKT2 are phosphorylated and activated, affinity is higher for AKT2. Interacts with ZDHHC13 (via ANK repeats). Interacts with ZDHHC17 (via ANK repeats). Post-translationally, palmitoylation by ZDHHC17 regulates association with the plasma membrane.

Its subcellular location is the cell membrane. It localises to the cytoplasm. It is found in the golgi apparatus. The protein localises to the golgi stack. Functions as a cytoplasmic linker protein. Involved in TGN-endosome dynamics. May modulate the cellular compartmentalization of AKT kinase family and promote its cell membrane localization, thereby playing a role in glucose transport in adipocytes. The protein is CAP-Gly domain-containing linker protein 3 (CLIP3) of Pongo abelii (Sumatran orangutan).